The sequence spans 439 residues: DNA damage-inducible protein 1 (439 aa).

Residues 1 to 82 (MQITIAIQDT…LALHVRETQR (82 aa)) enclose the Ubiquitin-like domain. The tract at residues 82 to 101 (RATAVPESQQGRPAAPPQQD) is disordered. Aspartate 220 is a catalytic residue. The tract at residues 333–398 (QDEPTIEGPG…PAPRAPQARS (66 aa)) is disordered. Composition is skewed to low complexity over residues 364 to 375 (GQAGPSTAAQPG) and 383 to 398 (PASA…QARS). The UBA domain maps to 398 to 438 (SFPREHIEQLVALGADEQKAIRALEATDGNVEYAASLIFEG).

It belongs to the DDI1 family. As to quaternary structure, binds ubiquitin and polyubiquitinated proteins.

The protein localises to the cytoplasm. Probable aspartic protease. May be involved in the regulation of exocytosis. Acts as a linker between the 19S proteasome and polyubiquitinated proteins via UBA domain interactions with ubiquitin for their subsequent degradation. Required for S-phase checkpoint control. This is DNA damage-inducible protein 1 (ddi-1) from Neurospora crassa (strain ATCC 24698 / 74-OR23-1A / CBS 708.71 / DSM 1257 / FGSC 987).